We begin with the raw amino-acid sequence, 266 residues long: Exosome complex component Rrp42 (266 aa).

Belongs to the RNase PH family. Rrp42 subfamily. As to quaternary structure, component of the archaeal exosome complex. Forms a hexameric ring-like arrangement composed of 3 Rrp41-Rrp42 heterodimers. The hexameric ring associates with a trimer of Rrp4 and/or Csl4 subunits.

The protein localises to the cytoplasm. Its function is as follows. Non-catalytic component of the exosome, which is a complex involved in RNA degradation. Contributes to the structuring of the Rrp41 active site. The protein is Exosome complex component Rrp42 of Methanosarcina acetivorans (strain ATCC 35395 / DSM 2834 / JCM 12185 / C2A).